The primary structure comprises 155 residues: 6,7-dimethyl-8-ribityllumazine synthase (155 aa).

Residues phenylalanine 23, 57-59, and 80-82 each bind 5-amino-6-(D-ribitylamino)uracil; these read AFE and AVI. 85 to 86 contacts (2S)-2-hydroxy-3-oxobutyl phosphate; the sequence is AT. Histidine 88 serves as the catalytic Proton donor. Tyrosine 113 is a 5-amino-6-(D-ribitylamino)uracil binding site. Arginine 127 contributes to the (2S)-2-hydroxy-3-oxobutyl phosphate binding site.

It belongs to the DMRL synthase family.

The catalysed reaction is (2S)-2-hydroxy-3-oxobutyl phosphate + 5-amino-6-(D-ribitylamino)uracil = 6,7-dimethyl-8-(1-D-ribityl)lumazine + phosphate + 2 H2O + H(+). It functions in the pathway cofactor biosynthesis; riboflavin biosynthesis; riboflavin from 2-hydroxy-3-oxobutyl phosphate and 5-amino-6-(D-ribitylamino)uracil: step 1/2. Its function is as follows. Catalyzes the formation of 6,7-dimethyl-8-ribityllumazine by condensation of 5-amino-6-(D-ribitylamino)uracil with 3,4-dihydroxy-2-butanone 4-phosphate. This is the penultimate step in the biosynthesis of riboflavin. This is 6,7-dimethyl-8-ribityllumazine synthase from Moorella thermoacetica (strain ATCC 39073 / JCM 9320).